Here is a 248-residue protein sequence, read N- to C-terminus: MRFPTPLIEGRLVRRYKRFLADVRLPDGTMVTAHCANPGAMLGLNTDGFRVLLSPSTNPLRKLGYSWELVEAELPGGPQWVGINTARPNALVAEAFRENKLAPLIGYETLRPEVAYGKASRVDFLASGGGRPPCHVEVKNCHLMRHAGLAEFPDCKAARSARHMEELAGVVTAGGRAMLIVVIQMRAGAFDVARDIDPVFDRALRMALEVGVEAYAYTCAVGPEGVAIDTPVPILTPGATVQPARTSG.

This sequence belongs to the SfsA family.

In Methylorubrum extorquens (strain CM4 / NCIMB 13688) (Methylobacterium extorquens), this protein is Sugar fermentation stimulation protein homolog.